Reading from the N-terminus, the 426-residue chain is Probable serine/threonine-protein kinase PBL3 (426 aa).

Residues 1-42 form a disordered region; it reads MGNCLDSSAKVDSSSHSPHANSASLSSRVSSKTSRSTVPSSL. G2 carries N-myristoyl glycine lipidation. The S-palmitoyl cysteine moiety is linked to residue C4. The segment covering 7 to 42 has biased composition (low complexity); the sequence is SSAKVDSSSHSPHANSASLSSRVSSKTSRSTVPSSL. T72 carries the phosphothreonine modification. A Protein kinase domain is found at 83-366; it reads FRPDSLLGEG…SEVLAKLDQL (284 aa). ATP is bound by residues 89-97 and K121; that span reads LGEGGFGYV. Y166 carries the phosphotyrosine modification. The active-site Proton acceptor is the D216. S250 carries the phosphoserine modification. Residues T251 and T256 each carry the phosphothreonine modification. Y264 carries the post-translational modification Phosphotyrosine. Residues 367–394 show a composition bias toward polar residues; it reads ESTKPGTGVGNRQAQIDSPRGSNGSIVQ. Positions 367 to 426 are disordered; it reads ESTKPGTGVGNRQAQIDSPRGSNGSIVQKSPRRYSYDRPLLHITPGASPLPTHNHSPRVR.

Belongs to the protein kinase superfamily. Ser/Thr protein kinase family. As to quaternary structure, interacts with the Xanthomonas campestris effector XopAC/AvrAC. In terms of tissue distribution, strongly expressed in leaves, moderately in flowers, and barely in roots.

The protein resides in the cell membrane. The protein localises to the nucleus. It carries out the reaction L-seryl-[protein] + ATP = O-phospho-L-seryl-[protein] + ADP + H(+). It catalyses the reaction L-threonyl-[protein] + ATP = O-phospho-L-threonyl-[protein] + ADP + H(+). Functionally, may be involved in plant defense signaling. The chain is Probable serine/threonine-protein kinase PBL3 from Arabidopsis thaliana (Mouse-ear cress).